Consider the following 265-residue polypeptide: RNA polymerase sigma factor SigI2 (265 aa).

Positions 71–84 (DEFSVGLAAFNEAI) match the Polymerase core binding motif. Residues 211–230 (KTELLKLLKINKKTIERNRT) constitute a DNA-binding region (H-T-H motif).

It belongs to the sigma-70 factor family. SigI subfamily. Interacts with RsgI2.

Its subcellular location is the cytoplasm. Negatively regulated by the anti-sigma-I factor RsgI2. Binding of the polysaccharide substrate to RsgI2 may lead to the release and activation of SigI2. In terms of biological role, sigma factors are initiation factors that promote the attachment of RNA polymerase to specific initiation sites and are then released. This sigma factor is involved in regulation of cellulosomal genes via an external polysaccharide-sensing mechanism. This is RNA polymerase sigma factor SigI2 from Acetivibrio thermocellus (strain ATCC 27405 / DSM 1237 / JCM 9322 / NBRC 103400 / NCIMB 10682 / NRRL B-4536 / VPI 7372) (Clostridium thermocellum).